The sequence spans 505 residues: Geissoschizine oxidase (505 aa).

A helical transmembrane segment spans residues 9–29; it reads FSSPAFFLLLPFLFLLIKPLI. Cys443 lines the heme pocket.

It belongs to the cytochrome P450 family. Heme is required as a cofactor. In terms of tissue distribution, mainly expressed in roots.

The protein resides in the membrane. The catalysed reaction is (19E)-geissoschizine + reduced [NADPH--hemoprotein reductase] + O2 = akuammicine + formate + oxidized [NADPH--hemoprotein reductase] + H2O + H(+). The enzyme catalyses (19E)-geissoschizine + reduced [NADPH--hemoprotein reductase] + O2 = 3,17-didehydrostemmadenine + oxidized [NADPH--hemoprotein reductase] + 2 H2O. It catalyses the reaction 3,17-didehydrostemmadenine = 17-dehydropreakuammicine. It functions in the pathway alkaloid biosynthesis. Its function is as follows. Monooxygenase involved in the biosynthesis of curare monoterpene indole alkaloids (MIAs), natural products such as strychnine, a neurotoxic compound used as a pesticide to control rodents, and its pharmacologically active derivatives, including brucine, used to regulate blood pressure. Curare alkaloids act as animal glycine receptor antagonists. Catalyzes the conversion of geissoschizine to dehydropreakuammicine by cyclization, which is spontaneously converted into akuammicine by aromatization. In Strychnos nux-vomica (Poison nut), this protein is Geissoschizine oxidase.